Here is a 1361-residue protein sequence, read N- to C-terminus: Zinc finger protein GLI4 (1361 aa).

The tract at residues 185-270 (SSFGHTPLLH…PQPPDHLTDL (86 aa)) is disordered. Polar residues-rich tracts occupy residues 198-208 (TFASRQQGALT) and 227-241 (NKVS…TVNQ). 5 consecutive C2H2-type zinc fingers follow at residues 289-314 (TNCH…NNDH), 322-349 (FVCR…MRRH), 355-379 (HKCT…LRSH), 385-410 (YVCD…NRTH), and 416-441 (YICK…KTVH). Disordered stretches follow at residues 434 to 527 (RKHV…TNNI), 556 to 584 (STVS…GTAE), 647 to 720 (NERR…LPNL), 787 to 832 (NAGL…SMNS), 906 to 946 (QNRE…APGA), and 1134 to 1230 (DGLH…PKDN). Residues 475-502 (SGREHSDSVSRDQEHCLQTRTIKTEDNM) are compositionally biased toward basic and acidic residues. Over residues 506–522 (SSPGGQSSCSSEPSPYG) the composition is skewed to low complexity. Residues 573–584 (QRIHSAETGTAE) are compositionally biased toward basic and acidic residues. The span at 653-670 (TSSTLSSAYTSRRSSGIS) shows a compositional bias: low complexity. 2 stretches are compositionally biased toward polar residues: residues 672–695 (YFSS…SSAD) and 710–720 (EASQHSGLPNL). Residues 805-821 (RASDPVRRTAGIDDKPL) show a composition bias toward basic and acidic residues. Polar residues-rich tracts occupy residues 913 to 939 (QNLQ…NTPE) and 1142 to 1164 (YTVQ…SGQA). Over residues 1172–1183 (PRPPAAPHPPNR) the composition is skewed to pro residues.

This sequence belongs to the GLI C2H2-type zinc-finger protein family.

It localises to the nucleus. Functionally, has an essential role in the early embryonic patterning of mesoderm and neuroectoderm. The protein is Zinc finger protein GLI4 (gli4) of Xenopus laevis (African clawed frog).